The sequence spans 417 residues: Tryptophan synthase beta chain (417 aa).

At lysine 108 the chain carries N6-(pyridoxal phosphate)lysine.

This sequence belongs to the TrpB family. In terms of assembly, tetramer of two alpha and two beta chains. It depends on pyridoxal 5'-phosphate as a cofactor.

It carries out the reaction (1S,2R)-1-C-(indol-3-yl)glycerol 3-phosphate + L-serine = D-glyceraldehyde 3-phosphate + L-tryptophan + H2O. It functions in the pathway amino-acid biosynthesis; L-tryptophan biosynthesis; L-tryptophan from chorismate: step 5/5. In terms of biological role, the beta subunit is responsible for the synthesis of L-tryptophan from indole and L-serine. In Mycobacterium leprae (strain TN), this protein is Tryptophan synthase beta chain (trpB).